Consider the following 207-residue polypeptide: MSGLPQGRPTFGAAQNVSAVVAYDLSAHMLDVVAQAAEARQLKNITTRQGYAESLPFADNAFDIVISRYSAHHWHDVGAALREVNRILKPGGRLIVMDVMSPGHPVRDIWLQTVEALRDTSHVRNYASGEWLTLINEANLIVDNLITDKLPLEFSSWVARMRTPEALVDAIRIYQQSASTEVRTYFALQNDGFFTSDIIMVDAHKAA.

It belongs to the methyltransferase superfamily.

This is an uncharacterized protein from Escherichia coli (strain K12).